The sequence spans 266 residues: Glutamate racemase (266 aa).

Residues 9–10 and 41–42 each bind substrate; these read DS and YG. Cysteine 72 functions as the Proton donor/acceptor in the catalytic mechanism. Position 73 to 74 (73 to 74) interacts with substrate; it reads NT. The active-site Proton donor/acceptor is the cysteine 184. 185 to 186 serves as a coordination point for substrate; sequence TH.

It belongs to the aspartate/glutamate racemases family.

The enzyme catalyses L-glutamate = D-glutamate. The protein operates within cell wall biogenesis; peptidoglycan biosynthesis. Its function is as follows. Provides the (R)-glutamate required for cell wall biosynthesis. In Staphylococcus haemolyticus, this protein is Glutamate racemase.